The sequence spans 540 residues: Phenylalanine--tRNA ligase beta subunit (540 aa).

Residues 268–342 (LRHTSVPFSL…MAYGYDRFTL (75 aa)) enclose the B5 domain. Mg(2+) contacts are provided by Asp320, Asp326, Glu329, and Asp330.

This sequence belongs to the phenylalanyl-tRNA synthetase beta subunit family. Type 2 subfamily. Tetramer of two alpha and two beta subunits. Mg(2+) serves as cofactor.

It localises to the cytoplasm. The enzyme catalyses tRNA(Phe) + L-phenylalanine + ATP = L-phenylalanyl-tRNA(Phe) + AMP + diphosphate + H(+). The polypeptide is Phenylalanine--tRNA ligase beta subunit (Metallosphaera sedula (strain ATCC 51363 / DSM 5348 / JCM 9185 / NBRC 15509 / TH2)).